Here is a 198-residue protein sequence, read N- to C-terminus: Autophagy-related protein 16 (198 aa).

Residues 24–177 (ELVQTCSQMA…NKELVDRWMK (154 aa)) adopt a coiled-coil conformation.

It belongs to the ATG16 family. Homodimer. Part of the ATG5-ATG12/ATG16 complex. Several units of each may be present in this complex. Interacts directly with ATG12.

It is found in the preautophagosomal structure membrane. Functionally, stabilizes the ATG5-ATG12 conjugate. The ATG5-ATG12/ATG16 complex is required for efficient promotion of ATG8-conjugation to phosphatidylethanolamine and ATG8 localization to the pre-autophagosomal structure (PAS). Also recruits ATG3 to the PAS. Involved in endoplasmic reticulum-specific autophagic process and is essential for the survival of cells subjected to severe ER stress. Autophagy is required for proper vegetative growth, asexual/sexual reproduction, and full virulence. Autophagy is particularly involved in the biosynthesis of deoxynivalenol (DON), an important virulence determinant. In Gibberella zeae (strain ATCC MYA-4620 / CBS 123657 / FGSC 9075 / NRRL 31084 / PH-1) (Wheat head blight fungus), this protein is Autophagy-related protein 16.